Consider the following 370-residue polypeptide: Chorismate synthase (370 aa).

R47 is a binding site for NADP(+). Residues 124-126 (RSS), G286, 301-305 (KPTAT), and R327 each bind FMN.

The protein belongs to the chorismate synthase family. As to quaternary structure, homotetramer. FMNH2 serves as cofactor.

The catalysed reaction is 5-O-(1-carboxyvinyl)-3-phosphoshikimate = chorismate + phosphate. It functions in the pathway metabolic intermediate biosynthesis; chorismate biosynthesis; chorismate from D-erythrose 4-phosphate and phosphoenolpyruvate: step 7/7. Catalyzes the anti-1,4-elimination of the C-3 phosphate and the C-6 proR hydrogen from 5-enolpyruvylshikimate-3-phosphate (EPSP) to yield chorismate, which is the branch point compound that serves as the starting substrate for the three terminal pathways of aromatic amino acid biosynthesis. This reaction introduces a second double bond into the aromatic ring system. This chain is Chorismate synthase, found in Trichodesmium erythraeum (strain IMS101).